Reading from the N-terminus, the 48-residue chain is SPbeta prophage-derived uncharacterized protein YotE (48 aa).

The chain is SPbeta prophage-derived uncharacterized protein YotE (yotE) from Bacillus subtilis (strain 168).